The sequence spans 169 residues: Neurotensin/neuromedin N (169 aa).

Positions 1–22 (MRGMNLQLVCLTLLAFSSWSLC) are cleaved as a signal peptide.

The protein belongs to the neurotensin family. Interacts with NTSR1. Interacts with SORT1. Interacts with SORL1. Post-translationally, neurotensin is cleaved and degraded by Angiotensin-converting enzyme (ACE) and neprilysin (MME).

The protein localises to the secreted. Its subcellular location is the cytoplasmic vesicle. The protein resides in the secretory vesicle. Its function is as follows. Neurotensin may play an endocrine or paracrine role in the regulation of fat metabolism. It causes contraction of smooth muscle. This is Neurotensin/neuromedin N (Nts) from Mus musculus (Mouse).